Reading from the N-terminus, the 104-residue chain is Circadian clock oscillator protein KaiB (104 aa).

Belongs to the KaiB family. In terms of assembly, the KaiABC complex composition changes during the circadian cycle to control KaiC phosphorylation. Complexes KaiC(6), KaiA(2-4):KaiC(6), KaiB(6):KaiC(6) and KaiC(6):KaiB(6):KaiA(12) are among the most important forms, many form cooperatively. Undergoes a major conformational rearrangment; in the free state forms homotetramers as a dimer of dimers. When bound to the CI domain of KaiC switches to a monomeric thioredoxin-fold (KaiB(fs)). KaiB(fs) binds CikA, leading it to dephosphorylate phospho-RpaA.

In terms of biological role, key component of the KaiABC oscillator complex, which constitutes the main circadian regulator in cyanobacteria. Complex composition changes during the circadian cycle to control KaiC phosphorylation. KaiA stimulates KaiC autophosphorylation, while KaiB sequesters KaiA, leading to KaiC autodephosphorylation. Phospho-Ser-431 KaiC accumulation triggers binding of KaiB to form the KaiB(6):KaiC(6) complex, leading to changes in output regulators CikA and SasA. KaiB switches to a thioredoxin-like fold (KaiB(fs)) when bound to KaiC. KaiB(6):KaiC(6) formation exposes a site for KaiA binding that sequesters KaiA from KaiC, making the KaiC(6):KaiB(6):KaiA(12) complex that results in KaiC autodephosphorylation. Functionally, a metamorphic protein which reversibly switches between an inactive tetrameric fold and a rare, thioredoxin-like monomeric fold (KaiB(fs)). KaiB(fs) binds phospho-KaiC, KaiA and CikA. KaiA and CikA compete for binding to KaiB(fs), and KaiB(fs) and SasA compete for binding to KaiC, thus the clock oscillator and output signal pathway are tightly coupled. This chain is Circadian clock oscillator protein KaiB, found in Rippkaea orientalis (strain PCC 8801 / RF-1) (Cyanothece sp. (strain PCC 8801)).